We begin with the raw amino-acid sequence, 282 residues long: 4-diphosphocytidyl-2-C-methyl-D-erythritol kinase (282 aa).

The active site involves lysine 12. An ATP-binding site is contributed by 95-105 (PMGGGIGGGSS). Residue aspartate 137 is part of the active site.

It belongs to the GHMP kinase family. IspE subfamily.

The catalysed reaction is 4-CDP-2-C-methyl-D-erythritol + ATP = 4-CDP-2-C-methyl-D-erythritol 2-phosphate + ADP + H(+). The protein operates within isoprenoid biosynthesis; isopentenyl diphosphate biosynthesis via DXP pathway; isopentenyl diphosphate from 1-deoxy-D-xylulose 5-phosphate: step 3/6. Catalyzes the phosphorylation of the position 2 hydroxy group of 4-diphosphocytidyl-2C-methyl-D-erythritol. The polypeptide is 4-diphosphocytidyl-2-C-methyl-D-erythritol kinase (Pseudomonas paraeruginosa (strain DSM 24068 / PA7) (Pseudomonas aeruginosa (strain PA7))).